Consider the following 154-residue polypeptide: MSKKFVITWDNMQHYCRELAQRQMPAEQWKGILGVSRGGLVPAAILARELGIRYVDTVCISSYDHDHQRDMTVLKAPEHDGEGFLIIDDLVDSGDTARKIREMYPKAKFVTVCAKPAGKDLVDEYVVDIPQDTWIEQPWDMVLSYVEPVNRKQK.

5-phospho-alpha-D-ribose 1-diphosphate contacts are provided by residues 37-38 (RG), R69, and 88-96 (DDLVDSGDT). R69 serves as a coordination point for GMP. A Mg(2+)-binding site is contributed by D89. Guanine is bound by residues D92 and I135. D92 and I135 together coordinate xanthine. GMP contacts are provided by residues 92 to 96 (DSGDT) and 134 to 135 (WI).

The protein belongs to the purine/pyrimidine phosphoribosyltransferase family. XGPT subfamily. In terms of assembly, homotetramer. It depends on Mg(2+) as a cofactor.

The protein localises to the cell inner membrane. The enzyme catalyses GMP + diphosphate = guanine + 5-phospho-alpha-D-ribose 1-diphosphate. The catalysed reaction is XMP + diphosphate = xanthine + 5-phospho-alpha-D-ribose 1-diphosphate. It carries out the reaction IMP + diphosphate = hypoxanthine + 5-phospho-alpha-D-ribose 1-diphosphate. It functions in the pathway purine metabolism; GMP biosynthesis via salvage pathway; GMP from guanine: step 1/1. Its pathway is purine metabolism; XMP biosynthesis via salvage pathway; XMP from xanthine: step 1/1. Purine salvage pathway enzyme that catalyzes the transfer of the ribosyl-5-phosphate group from 5-phospho-alpha-D-ribose 1-diphosphate (PRPP) to the N9 position of the 6-oxopurines guanine and xanthine to form the corresponding ribonucleotides GMP (guanosine 5'-monophosphate) and XMP (xanthosine 5'-monophosphate), with the release of PPi. To a lesser extent, also acts on hypoxanthine. The protein is Xanthine-guanine phosphoribosyltransferase of Vibrio cholerae serotype O1 (strain ATCC 39541 / Classical Ogawa 395 / O395).